The primary structure comprises 146 residues: Basic phospholipase A2 (146 aa).

The N-terminal stretch at 1–21 is a signal peptide; that stretch reads MNPAHLLVLAAVCVSLLGASS. A propeptide spanning residues 22 to 27 is cleaved from the precursor; sequence VPPRPL. 7 disulfides stabilise this stretch: C38–C97, C52–C145, C54–C70, C69–C127, C76–C120, C86–C113, and C106–C118. Ca(2+) is bound by residues Y53, G55, and G57. H73 is an active-site residue. D74 is a Ca(2+) binding site. N-linked (GlcNAc...) asparagine glycosylation is present at N109. Residue D121 is part of the active site.

Belongs to the phospholipase A2 family. Group I subfamily. D49 sub-subfamily. Ca(2+) is required as a cofactor. Expressed by the venom gland.

It is found in the secreted. It catalyses the reaction a 1,2-diacyl-sn-glycero-3-phosphocholine + H2O = a 1-acyl-sn-glycero-3-phosphocholine + a fatty acid + H(+). PLA2 catalyzes the calcium-dependent hydrolysis of the 2-acyl groups in 3-sn-phosphoglycerides. The polypeptide is Basic phospholipase A2 (Micrurus corallinus (Brazilian coral snake)).